Here is a 135-residue protein sequence, read N- to C-terminus: Large ribosomal subunit protein eL32 (135 aa).

Belongs to the eukaryotic ribosomal protein eL32 family.

This is Large ribosomal subunit protein eL32 (rpl32e) from Methanococcus vannielii.